The sequence spans 115 residues: Pancreatic progenitor cell differentiation and proliferation factor B (115 aa).

Residues 21–48 (IGSTSSSSSCGSSEYSGEVIPHHPGLPK) form a disordered region. The span at 22–37 (GSTSSSSSCGSSEYSG) shows a compositional bias: low complexity.

The protein belongs to the PPDPF family.

Its function is as follows. Probable regulator of exocrine pancreas development. This is Pancreatic progenitor cell differentiation and proliferation factor B (ppdpfb) from Danio rerio (Zebrafish).